The sequence spans 71 residues: UPF0352 protein VCM66_1964 (71 aa).

This sequence belongs to the UPF0352 family.

This Vibrio cholerae serotype O1 (strain M66-2) protein is UPF0352 protein VCM66_1964.